Consider the following 256-residue polypeptide: uncharacterized protein (256 aa).

2 disordered regions span residues 1–171 (MARG…QLKH) and 185–256 (NGQR…LYND). Residues 14 to 39 (KRRSKVQEEEEHVEGSEEEVEEPEQK) are a coiled coil. 2 stretches are compositionally biased toward acidic residues: residues 21 to 35 (EEEE…EVEE) and 64 to 92 (SDDD…DNDE). Residues 108–129 (NRGDHESHDDNSDNEEQGDRGN) are compositionally biased toward basic and acidic residues. Gly residues predominate over residues 192-205 (KRGGPPRGSFGQRG). The segment covering 219–234 (RQGDTRDTRDTRDTRL) has biased composition (basic and acidic residues).

This is an uncharacterized protein from Acanthamoeba polyphaga (Amoeba).